Here is a 113-residue protein sequence, read N- to C-terminus: U11-theraphotoxin-Hhn1a (113 aa).

The first 21 residues, 1 to 21 (MNTVRVTFLLVFVLAVSLGQA), serve as a signal peptide directing secretion. Positions 22-74 (DKDENRMEMQEKTEQGKSYLDFAENLLLQKLEELEAKLPEEDSEESRNSRQKR) are excised as a propeptide. Over residues 58 to 69 (KLPEEDSEESRN) the composition is skewed to basic and acidic residues. A disordered region spans residues 58–82 (KLPEEDSEESRNSRQKRCIGEGVPC). Cystine bridges form between cysteine 75–cysteine 90, cysteine 82–cysteine 95, and cysteine 89–cysteine 110.

It belongs to the neurotoxin 14 (magi-1) family. 01 (HNTX-16) subfamily. In terms of tissue distribution, expressed by the venom gland.

Its subcellular location is the secreted. Functionally, probable ion channel inhibitor. The protein is U11-theraphotoxin-Hhn1a of Cyriopagopus hainanus (Chinese bird spider).